The chain runs to 483 residues: Probable 4-hydroxyphenylacetate 3-monooxygenase (483 aa).

Residues 104 to 108 (RSPDY) and histidine 150 each bind substrate. Residues 150 to 152 (HTF), 156 to 159 (QVNR), and threonine 193 each bind FAD. 206–207 (AP) is a binding site for substrate. Position 452–455 (452–455 (DPIR)) interacts with FAD.

The protein belongs to the FADH(2)-utilizing monooxygenase family.

It carries out the reaction 4-hydroxyphenylacetate + FADH2 + O2 = 3,4-dihydroxyphenylacetate + FAD + H2O + H(+). Its pathway is aromatic compound metabolism; 4-hydroxyphenylacetate degradation; pyruvate and succinate semialdehyde from 4-hydroxyphenylacetate: step 1/7. Its function is as follows. Catalyzes the hydroxylation of 4-hydroxyphenylacetic acid (4HPA), leading to the production of 3,4-dihydroxyphenylacetic acid (DHPA). This is Probable 4-hydroxyphenylacetate 3-monooxygenase (yoaI) from Bacillus subtilis (strain 168).